We begin with the raw amino-acid sequence, 261 residues long: Triosephosphate isomerase (261 aa).

Position 10-12 (10-12 (NWK)) interacts with substrate. Residue His100 is the Electrophile of the active site. The active-site Proton acceptor is Glu172. Residues Gly178, Ser218, and 239-240 (GG) each bind substrate.

The protein belongs to the triosephosphate isomerase family. Homodimer.

The protein localises to the cytoplasm. The catalysed reaction is D-glyceraldehyde 3-phosphate = dihydroxyacetone phosphate. Its pathway is carbohydrate biosynthesis; gluconeogenesis. The protein operates within carbohydrate degradation; glycolysis; D-glyceraldehyde 3-phosphate from glycerone phosphate: step 1/1. Functionally, involved in the gluconeogenesis. Catalyzes stereospecifically the conversion of dihydroxyacetone phosphate (DHAP) to D-glyceraldehyde-3-phosphate (G3P). This chain is Triosephosphate isomerase, found in Mycobacterium marinum (strain ATCC BAA-535 / M).